Consider the following 233-residue polypeptide: tRNA (guanine-N(1)-)-methyltransferase (233 aa).

S-adenosyl-L-methionine-binding positions include G113 and 133 to 138 (IGDYVL).

It belongs to the RNA methyltransferase TrmD family. As to quaternary structure, homodimer.

The protein localises to the cytoplasm. It carries out the reaction guanosine(37) in tRNA + S-adenosyl-L-methionine = N(1)-methylguanosine(37) in tRNA + S-adenosyl-L-homocysteine + H(+). Its function is as follows. Specifically methylates guanosine-37 in various tRNAs. In Ruminiclostridium cellulolyticum (strain ATCC 35319 / DSM 5812 / JCM 6584 / H10) (Clostridium cellulolyticum), this protein is tRNA (guanine-N(1)-)-methyltransferase.